Reading from the N-terminus, the 252-residue chain is D-aminoacyl-tRNA deacylase (252 aa).

It belongs to the DtdA deacylase family. In terms of assembly, monomer. It depends on Zn(2+) as a cofactor.

It carries out the reaction a D-aminoacyl-tRNA + H2O = a tRNA + a D-alpha-amino acid + H(+). It catalyses the reaction glycyl-tRNA(Ala) + H2O = tRNA(Ala) + glycine + H(+). In terms of biological role, D-aminoacyl-tRNA deacylase with broad substrate specificity. By recycling D-aminoacyl-tRNA to D-amino acids and free tRNA molecules, this enzyme counteracts the toxicity associated with the formation of D-aminoacyl-tRNA entities in vivo. In Pyrobaculum arsenaticum (strain DSM 13514 / JCM 11321 / PZ6), this protein is D-aminoacyl-tRNA deacylase.